Here is a 358-residue protein sequence, read N- to C-terminus: DnaJ homolog subfamily B member 11 (358 aa).

The N-terminal stretch at 1-22 (MAPQNLSTFCLLLLYLIGAVIA) is a signal peptide. One can recognise a J domain in the interval 25 to 90 (DFYKILGVPR…EKRKQYDTYG (66 aa)). A Phosphothreonine modification is found at threonine 188. The N-linked (GlcNAc...) asparagine glycan is linked to asparagine 261.

As to quaternary structure, part of a large chaperone multiprotein complex comprising DNAJB11, HSP90B1, HSPA5, HYOU, PDIA2, PDIA4, PDIA6, PPIB, SDF2L1, UGGT1 and very small amounts of ERP29, but not, or at very low levels, CALR nor CANX. Binds to denatured substrates in an ATP-independent manner. Interacts via the J domain with HSPA5 in an ATP-dependent manner. In terms of processing, contains high-mannose Endo H-sensitive carbohydrates. Cys-169, Cys-171, Cys-193 and Cys-196 form intramolecular disulfide bonds. The preferential partner for each Cys is not known. Post-translationally, thr-188 was reported to be phosphorylated upon DNA damage by ATM or ATR; however as this position has been shown to be in the ER lumen, the in vivo relevance is not proven. As to expression, widely expressed.

Its subcellular location is the endoplasmic reticulum lumen. Functionally, as a co-chaperone for HSPA5 it is required for proper folding, trafficking or degradation of proteins. Binds directly to both unfolded proteins that are substrates for ERAD and nascent unfolded peptide chains, but dissociates from the HSPA5-unfolded protein complex before folding is completed. May help recruiting HSPA5 and other chaperones to the substrate. Stimulates HSPA5 ATPase activity. It is necessary for maturation and correct trafficking of PKD1. This Homo sapiens (Human) protein is DnaJ homolog subfamily B member 11 (DNAJB11).